The chain runs to 139 residues: Nucleoside diphosphate kinase (139 aa).

ATP contacts are provided by K10, F58, R86, T92, R104, and N114. H117 acts as the Pros-phosphohistidine intermediate in catalysis.

It belongs to the NDK family. Homotetramer. Mg(2+) is required as a cofactor.

It is found in the cytoplasm. It carries out the reaction a 2'-deoxyribonucleoside 5'-diphosphate + ATP = a 2'-deoxyribonucleoside 5'-triphosphate + ADP. The catalysed reaction is a ribonucleoside 5'-diphosphate + ATP = a ribonucleoside 5'-triphosphate + ADP. Functionally, major role in the synthesis of nucleoside triphosphates other than ATP. The ATP gamma phosphate is transferred to the NDP beta phosphate via a ping-pong mechanism, using a phosphorylated active-site intermediate. This is Nucleoside diphosphate kinase from Nocardia farcinica (strain IFM 10152).